The chain runs to 393 residues: Protein phosphatase 2C homolog 4 (393 aa).

One can recognise a PPM-type phosphatase domain in the interval 33-368 (YNCVGSMQGY…DNMTAIIVVL (336 aa)). Mn(2+) contacts are provided by D83, G84, D310, and D359.

This sequence belongs to the PP2C family. It depends on Mg(2+) as a cofactor. Mn(2+) is required as a cofactor.

The enzyme catalyses O-phospho-L-seryl-[protein] + H2O = L-seryl-[protein] + phosphate. The catalysed reaction is O-phospho-L-threonyl-[protein] + H2O = L-threonyl-[protein] + phosphate. The chain is Protein phosphatase 2C homolog 4 (PTC4) from Saccharomyces cerevisiae (strain ATCC 204508 / S288c) (Baker's yeast).